Reading from the N-terminus, the 819-residue chain is Pentatricopeptide repeat-containing protein At1g52620 (819 aa).

PPR repeat units lie at residues 98 to 132, 133 to 163, 169 to 203, 204 to 238, 239 to 273, 274 to 308, 309 to 343, 344 to 378, 379 to 413, 414 to 448, 449 to 483, 484 to 518, 519 to 553, 554 to 588, 589 to 623, 624 to 659, 709 to 743, and 744 to 779; these read NGFA…NVKL, THEA…VVEL, DVIA…GDSV, DNYS…GCIP, NIVF…GFMP, TLET…GLRV, SVWF…DCKP, DVAT…GLIP, NNLS…GCKP, DIVT…GVSP, DAAI…NILP, DAYV…GVKV, DVVH…HLVP, DKFT…KCKP, NVVT…DLVP, NVVT…KCVP, HAAA…GFSP, and DPVS…GLEV.

The protein belongs to the PPR family. P subfamily.

The sequence is that of Pentatricopeptide repeat-containing protein At1g52620 from Arabidopsis thaliana (Mouse-ear cress).